Here is a 451-residue protein sequence, read N- to C-terminus: NADP-specific glutamate dehydrogenase (451 aa).

Lys-114 is an active-site residue.

The protein belongs to the Glu/Leu/Phe/Val dehydrogenases family. As to quaternary structure, homohexamer.

It carries out the reaction L-glutamate + NADP(+) + H2O = 2-oxoglutarate + NH4(+) + NADPH + H(+). This Fusarium fujikuroi (Bakanae and foot rot disease fungus) protein is NADP-specific glutamate dehydrogenase (GDH2).